The sequence spans 2347 residues: tRNA(Glu)-specific nuclease WapA (2347 aa).

Residues 1 to 45 form the signal peptide; the sequence is MSEYYFYYKRREKMKKRKRRNFKRFIAAFLVLALIISLVPADVLA. The interval 50 to 72 is disordered; the sequence is EENGNRIVADDPEETLQKEQTEE. YD repeat units lie at residues 1045–1078, 1088–1116, 1649–1684, 1691–1729, and 2095–2126; these read YNDKNQLTAITDASGRKLTFTYDENGHVTSITGP, ENDLLKKVTDTDGTVTSYDYDGEGRLVKQ, YDETGKKTAETDAKGEKTTYTYDQADQLTNMTLSNG, YDKEGNEVSKTIRAGADQTYKYEYDVMGKLVKTTDPLGN, and YNAHGDVIAISDSTGKTVAKYQYDAWGNPTKT.

This sequence belongs to the RHS/WapA nuclease family.

The protein localises to the secreted. Its subcellular location is the cell wall. Its function is as follows. Toxic component of a toxin-immunity protein module, which functions as a cellular contact-dependent growth inhibition (CDI) system. A site-specific tRNA(Glu) nuclease, the C-terminus (residues 2214-2346) probably removes 2 or 4 nucleotides from the 3' end of tRNA(Glu) but not tRNA2(Arg) or tRNA3(Ser) (upon expression in E.coli), possibly endonucleolytically. The nuclease activity is neutralized by expression of the cognate immunity protein WapI from the same strain, but not its homolog from 2 other B.subtilis strains. The C-terminus cannot be expressed on its own in E.coli, however it can be cloned in the presence of its cognate immunity protein gene wapI. Cell contact is probably necessary for growth inhibition. This is tRNA(Glu)-specific nuclease WapA (wapA) from Bacillus subtilis subsp. natto (strain BEST195).